The following is a 429-amino-acid chain: Aspartate--tRNA(Asp/Asn) ligase (429 aa).

Position 167 (Glu167) interacts with L-aspartate. The segment at 189 to 192 (QLYK) is aspartate. Arg210 serves as a coordination point for L-aspartate. Residues 210-212 (RAE) and Glu352 contribute to the ATP site. Mg(2+) contacts are provided by Glu352 and Ser355. The L-aspartate site is built by Ser355 and Arg359. An ATP-binding site is contributed by 400–403 (GLAR).

Belongs to the class-II aminoacyl-tRNA synthetase family. Type 2 subfamily. In terms of assembly, homodimer. It depends on Mg(2+) as a cofactor.

The protein resides in the cytoplasm. The catalysed reaction is tRNA(Asx) + L-aspartate + ATP = L-aspartyl-tRNA(Asx) + AMP + diphosphate. Aspartyl-tRNA synthetase with relaxed tRNA specificity since it is able to aspartylate not only its cognate tRNA(Asp) but also tRNA(Asn). Reaction proceeds in two steps: L-aspartate is first activated by ATP to form Asp-AMP and then transferred to the acceptor end of tRNA(Asp/Asn). The chain is Aspartate--tRNA(Asp/Asn) ligase from Sulfurisphaera tokodaii (strain DSM 16993 / JCM 10545 / NBRC 100140 / 7) (Sulfolobus tokodaii).